Reading from the N-terminus, the 559-residue chain is (R)-mandelonitrile lyase 1 (559 aa).

Residues 1-27 (MEKSTMSVILFVLHLLVLHLQYSEVHS) form the signal peptide. N-linked (GlcNAc...) asparagine glycosylation is found at Asn30 and Asn44. FAD is bound by residues 63–64 (TS), 82–83 (ER), Thr133, and 137–140 (NAGV). Residues Asn145, Asn162, Asn178, and Asn218 are each glycosylated (N-linked (GlcNAc...) asparagine). Val244 contributes to the FAD binding site. Asn252, Asn255, Asn309, Asn380, Asn402, Asn420, and Asn467 each carry an N-linked (GlcNAc...) asparagine glycan. The cysteines at positions 427 and 478 are disulfide-linked. Residue Tyr485 coordinates substrate. 486–487 (WH) contacts FAD. Residue His487 is the Proton donor of the active site. Residue His525 is the Proton acceptor of the active site. 526 to 527 (PQ) is a binding site for FAD.

It belongs to the GMC oxidoreductase family. As to quaternary structure, monomer. FAD serves as cofactor.

The catalysed reaction is (R)-mandelonitrile = benzaldehyde + hydrogen cyanide. In terms of biological role, involved in cyanogenesis, the release of HCN from injured tissues. Catalyzes the stereospecific addition of HCN to a variety of aldehydes in vitro. It is a major seed constituent, and could have the additional role of a storage form for reduced nitrogen. This is (R)-mandelonitrile lyase 1 (MDL1) from Prunus dulcis (Almond).